Consider the following 446-residue polypeptide: Probable tRNA modification GTPase MnmE (446 aa).

Arg28, Glu87, and Arg126 together coordinate (6S)-5-formyl-5,6,7,8-tetrahydrofolate. One can recognise a TrmE-type G domain in the interval 218–373 (GIQVALLGPA…LKQLIWQQAT (156 aa)). A K(+)-binding site is contributed by Asn228. GTP contacts are provided by residues 228 to 233 (NAGKST), 247 to 253 (TPIAGTT), and 272 to 275 (DTAG). Mg(2+) is bound at residue Ser232. Thr247, Ile249, and Thr252 together coordinate K(+). Residue Thr253 participates in Mg(2+) binding. Lys446 is a binding site for (6S)-5-formyl-5,6,7,8-tetrahydrofolate.

The protein belongs to the TRAFAC class TrmE-Era-EngA-EngB-Septin-like GTPase superfamily. TrmE GTPase family. K(+) is required as a cofactor.

It is found in the plastid. It localises to the chloroplast. Exhibits a very high intrinsic GTPase hydrolysis rate. Involved in the addition of a carboxymethylaminomethyl (cmnm) group at the wobble position (U34) of certain tRNAs, forming tRNA-cmnm(5)s(2)U34. The chain is Probable tRNA modification GTPase MnmE from Cyanidioschyzon merolae (strain NIES-3377 / 10D) (Unicellular red alga).